Consider the following 305-residue polypeptide: Peroxisome biogenesis factor 2 (305 aa).

Residues 1 to 15 (MAAREESTQSANRVL) are Peroxisomal matrix-facing. Residues 16 to 42 (RISQLDALELNKALEQLVWSQFTQCFH) form a helical membrane-spanning segment. Topologically, residues 43-48 (GFKPGL) are cytoplasmic. A helical membrane pass occupies residues 49 to 74 (LARFEPEVKAFLWLFLWRFTIYSKNA). Residues 75–98 (TVGQSVLNIQHKNDSSPNPVYQPP) are Peroxisomal matrix-facing. A helical transmembrane segment spans residues 99 to 125 (SKNQKLLYAVCTIGGRWLEERCYDLFR). Over 126–133 (NRHLASFG) the chain is Cytoplasmic. A helical membrane pass occupies residues 134 to 160 (KAKQCMNFVVGLLKLGELMNFLIFLQK). Topologically, residues 161–187 (GKFATLTERLLGIHSVFCKPQNMREVG) are peroxisomal matrix. The helical transmembrane segment at 188-211 (FEYMNRELLWHGFAEFLIFLLPLI) threads the bilayer. Topologically, residues 212-305 (NIQKLKAKLS…GIQMSEVNAL (94 aa)) are cytoplasmic. Zn(2+) is bound by residues Cys-244, Cys-247, Cys-259, His-261, Cys-264, Cys-267, Cys-280, and Cys-283. The RING-type zinc finger occupies 244–284 (CALCGEWPTMPHTIGCEHVFCYYCVKSSFLFDIYFTCPKCG).

This sequence belongs to the pex2/pex10/pex12 family. As to quaternary structure, component of the PEX2-PEX10-PEX12 retrotranslocation channel, composed of PEX2, PEX10 and PEX12. In terms of processing, forms intramolecular and intermolecular disulfide bonds in response to reactive oxygen species (ROS), promoting higher stability.

It is found in the peroxisome membrane. It carries out the reaction [E2 ubiquitin-conjugating enzyme]-S-ubiquitinyl-L-cysteine + [acceptor protein]-L-cysteine = [E2 ubiquitin-conjugating enzyme]-L-cysteine + [acceptor protein]-S-ubiquitinyl-L-cysteine.. It catalyses the reaction S-ubiquitinyl-[E2 ubiquitin-conjugating enzyme]-L-cysteine + [acceptor protein]-L-lysine = [E2 ubiquitin-conjugating enzyme]-L-cysteine + N(6)-ubiquitinyl-[acceptor protein]-L-lysine.. It participates in protein modification; protein ubiquitination. Its function is as follows. E3 ubiquitin-protein ligase component of a retrotranslocation channel required for peroxisome organization by mediating export of the PEX5 receptor from peroxisomes to the cytosol, thereby promoting PEX5 recycling. The retrotranslocation channel is composed of PEX2, PEX10 and PEX12; each subunit contributing transmembrane segments that coassemble into an open channel that specifically allows the passage of PEX5 through the peroxisomal membrane. PEX2 also regulates peroxisome organization by acting as a E3 ubiquitin-protein ligase. PEX2 ubiquitinates PEX5 during its passage through the retrotranslocation channel: catalyzes monoubiquitination of PEX5 at 'Cys-11', a modification that acts as a signal for PEX5 extraction into the cytosol. Required for pexophagy in response to starvation by mediating ubiquitination of peroxisomal proteins, such as PEX5 and ABCD3/PMP70. Also involved in the response to reactive oxygen species (ROS) by mediating 'Lys-48'-linked polyubiquitination and subsequent degradation of PNPLA2/ATGL, thereby regulating lipolysis. This is Peroxisome biogenesis factor 2 from Mus musculus (Mouse).